A 151-amino-acid chain; its full sequence is Ribosome maturation factor RimP (151 aa).

It belongs to the RimP family.

It localises to the cytoplasm. Functionally, required for maturation of 30S ribosomal subunits. The sequence is that of Ribosome maturation factor RimP from Haemophilus influenzae (strain 86-028NP).